A 250-amino-acid chain; its full sequence is 2,3-bisphosphoglycerate-dependent phosphoglycerate mutase (250 aa).

Residues 8 to 15 (RHGESKWN), 21 to 22 (TG), R60, 87 to 90 (ERHY), K98, 114 to 115 (RR), and 183 to 184 (GN) contribute to the substrate site. Catalysis depends on H9, which acts as the Tele-phosphohistidine intermediate. The active-site Proton donor/acceptor is E87.

Belongs to the phosphoglycerate mutase family. BPG-dependent PGAM subfamily.

It catalyses the reaction (2R)-2-phosphoglycerate = (2R)-3-phosphoglycerate. The protein operates within carbohydrate degradation; glycolysis; pyruvate from D-glyceraldehyde 3-phosphate: step 3/5. In terms of biological role, catalyzes the interconversion of 2-phosphoglycerate and 3-phosphoglycerate. The protein is 2,3-bisphosphoglycerate-dependent phosphoglycerate mutase of Borrelia recurrentis (strain A1).